Consider the following 161-residue polypeptide: Nucleotide-binding protein Bcenmc03_2579 (161 aa).

The protein belongs to the YajQ family.

Its function is as follows. Nucleotide-binding protein. The chain is Nucleotide-binding protein Bcenmc03_2579 from Burkholderia orbicola (strain MC0-3).